The chain runs to 165 residues: Small ribosomal subunit protein uS5 (165 aa).

The S5 DRBM domain occupies 13–76 (LEEKVLVVNR…EAAKKNLMKI (64 aa)).

This sequence belongs to the universal ribosomal protein uS5 family. As to quaternary structure, part of the 30S ribosomal subunit. Contacts proteins S4 and S8.

Its function is as follows. With S4 and S12 plays an important role in translational accuracy. In terms of biological role, located at the back of the 30S subunit body where it stabilizes the conformation of the head with respect to the body. This chain is Small ribosomal subunit protein uS5, found in Chlamydia pneumoniae (Chlamydophila pneumoniae).